The primary structure comprises 212 residues: uncharacterized protein (212 aa).

The 83-residue stretch at 105 to 187 (NTIYLVEGDF…QVKVVQLKGK (83 aa)) folds into the Toprim domain.

This is an uncharacterized protein from Mycoplasma pneumoniae (strain ATCC 29342 / M129 / Subtype 1) (Mycoplasmoides pneumoniae).